The following is a 184-amino-acid chain: ATP-dependent protease subunit HslV (184 aa).

Threonine 12 is an active-site residue. Na(+) is bound by residues alanine 166, cysteine 169, and threonine 172.

This sequence belongs to the peptidase T1B family. HslV subfamily. In terms of assembly, a double ring-shaped homohexamer of HslV is capped on each side by a ring-shaped HslU homohexamer. The assembly of the HslU/HslV complex is dependent on binding of ATP.

The protein resides in the cytoplasm. The enzyme catalyses ATP-dependent cleavage of peptide bonds with broad specificity.. Its activity is regulated as follows. Allosterically activated by HslU binding. In terms of biological role, protease subunit of a proteasome-like degradation complex believed to be a general protein degrading machinery. The sequence is that of ATP-dependent protease subunit HslV from Brucella melitensis biotype 1 (strain ATCC 23456 / CCUG 17765 / NCTC 10094 / 16M).